A 705-amino-acid polypeptide reads, in one-letter code: Cell cycle serine/threonine-protein kinase CDC5/MSD2 (705 aa).

Position 23 is a phosphothreonine (T23). Basic and acidic residues predominate over residues 41–53 (QTKRLDPNNDHHH). The interval 41 to 63 (QTKRLDPNNDHHHQPAQKKKREK) is disordered. The region spanning 82 to 337 (YHRGHFLGEG…LTEIMDYVWF (256 aa)) is the Protein kinase domain. ATP contacts are provided by residues 88-96 (LGEGGFARC) and K110. The Proton acceptor role is filled by D204. S419 is subject to Phosphoserine. Residues 513-595 (IVTKWVDYSN…VDFFAKYMKA (83 aa)) form the POLO box 1 domain. Residues E553, H569, H609, and D612 each coordinate Zn(2+). In terms of domain architecture, POLO box 2 spans 614–700 (FLRRYTRYKP…IKEGLKQKST (87 aa)).

This sequence belongs to the protein kinase superfamily. Ser/Thr protein kinase family. CDC5/Polo subfamily. As to quaternary structure, interacts with CDC48; the interaction is likely to result in CDC5 degradation. Interacts with CSA1.

The protein localises to the cytoplasm. It is found in the cytoskeleton. Its subcellular location is the microtubule organizing center. The protein resides in the spindle pole body. It catalyses the reaction L-seryl-[protein] + ATP = O-phospho-L-seryl-[protein] + ADP + H(+). The catalysed reaction is L-threonyl-[protein] + ATP = O-phospho-L-threonyl-[protein] + ADP + H(+). Functionally, protein kinase required for the cell cycle where it is involved in mitotic exit. A component of the fear (CDC14 early anaphase release) network which promotes CDC14 release from the nucleolus during early anaphase. Phosphorylates SCC1/MCD1 and NET1. This chain is Cell cycle serine/threonine-protein kinase CDC5/MSD2 (CDC5), found in Saccharomyces cerevisiae (strain ATCC 204508 / S288c) (Baker's yeast).